The primary structure comprises 485 residues: Rhamnulokinase (485 aa).

An ATP-binding site is contributed by 11-15 (ASSGR). Residues alanine 79 and 234–236 (HDT) each bind substrate. Catalysis depends on aspartate 235, which acts as the Proton acceptor. Residue threonine 257 participates in ATP binding. Residue asparagine 294 participates in substrate binding. ATP-binding residues include glutamine 302 and glycine 401.

The protein belongs to the rhamnulokinase family. Requires Mg(2+) as cofactor.

The enzyme catalyses L-rhamnulose + ATP = L-rhamnulose 1-phosphate + ADP + H(+). The protein operates within carbohydrate degradation; L-rhamnose degradation; glycerone phosphate from L-rhamnose: step 2/3. In terms of biological role, involved in the catabolism of L-rhamnose (6-deoxy-L-mannose). Catalyzes the transfer of the gamma-phosphate group from ATP to the 1-hydroxyl group of L-rhamnulose to yield L-rhamnulose 1-phosphate. This is Rhamnulokinase from Ligilactobacillus salivarius (strain UCC118) (Lactobacillus salivarius).